We begin with the raw amino-acid sequence, 328 residues long: G2/mitotic-specific cyclin-2 (328 aa).

This sequence belongs to the cyclin family. Cyclin AB subfamily. As to quaternary structure, interacts with the CDC2 protein kinase to form a serine/threonine kinase holoenzyme complex also known as maturation promoting factor (MPF). The cyclin subunit imparts substrate specificity to the complex. As to expression, only expressed in organs with dividing cells.

In terms of biological role, essential for the control of the cell cycle at the G2/M (mitosis) transition. The protein is G2/mitotic-specific cyclin-2 of Medicago sativa (Alfalfa).